The primary structure comprises 433 residues: D-amino acid dehydrogenase (433 aa).

3–17 provides a ligand contact to FAD; the sequence is VLVLGSGVIGTTSAY.

This sequence belongs to the DadA oxidoreductase family. Requires FAD as cofactor.

It catalyses the reaction a D-alpha-amino acid + A + H2O = a 2-oxocarboxylate + AH2 + NH4(+). Its function is as follows. Oxidative deamination of D-amino acids. This Pseudomonas syringae pv. tomato (strain ATCC BAA-871 / DC3000) protein is D-amino acid dehydrogenase.